We begin with the raw amino-acid sequence, 100 residues long: Urease subunit gamma (100 aa).

The protein belongs to the urease gamma subunit family. Heterotrimer of UreA (gamma), UreB (beta) and UreC (alpha) subunits. Three heterotrimers associate to form the active enzyme.

It is found in the cytoplasm. The catalysed reaction is urea + 2 H2O + H(+) = hydrogencarbonate + 2 NH4(+). It functions in the pathway nitrogen metabolism; urea degradation; CO(2) and NH(3) from urea (urease route): step 1/1. This chain is Urease subunit gamma, found in Saccharopolyspora erythraea (strain ATCC 11635 / DSM 40517 / JCM 4748 / NBRC 13426 / NCIMB 8594 / NRRL 2338).